The following is a 271-amino-acid chain: Putative pyruvate, phosphate dikinase regulatory protein (271 aa).

An ADP-binding site is contributed by 153 to 160; the sequence is GVSRTSKT.

Belongs to the pyruvate, phosphate/water dikinase regulatory protein family. PDRP subfamily.

The catalysed reaction is N(tele)-phospho-L-histidyl/L-threonyl-[pyruvate, phosphate dikinase] + ADP = N(tele)-phospho-L-histidyl/O-phospho-L-threonyl-[pyruvate, phosphate dikinase] + AMP + H(+). It catalyses the reaction N(tele)-phospho-L-histidyl/O-phospho-L-threonyl-[pyruvate, phosphate dikinase] + phosphate + H(+) = N(tele)-phospho-L-histidyl/L-threonyl-[pyruvate, phosphate dikinase] + diphosphate. In terms of biological role, bifunctional serine/threonine kinase and phosphorylase involved in the regulation of the pyruvate, phosphate dikinase (PPDK) by catalyzing its phosphorylation/dephosphorylation. This Shouchella clausii (strain KSM-K16) (Alkalihalobacillus clausii) protein is Putative pyruvate, phosphate dikinase regulatory protein.